Reading from the N-terminus, the 163-residue chain is Neurotrophin-3 (163 aa).

Residues 1–3 (IQS) form the signal peptide. Positions 4-119 (TSMDQGILTE…ALNRTSRRKR (116 aa)) are excised as a propeptide. Disordered regions lie at residues 38–60 (ARTK…ATAS) and 90–131 (LLSE…YSVC). N-linked (GlcNAc...) asparagine glycosylation is present at Asn-112.

The protein belongs to the NGF-beta family.

The protein resides in the secreted. Seems to promote the survival of visceral and proprioceptive sensory neurons. This is Neurotrophin-3 (NTF3) from Eunectes notaeus (Yellow anaconda).